A 184-amino-acid polypeptide reads, in one-letter code: ATP synthase subunit b, chloroplastic (184 aa).

Residues 27–49 (LATNPINLSVVFGVLIFFGKGVL) traverse the membrane as a helical segment.

The protein belongs to the ATPase B chain family. As to quaternary structure, F-type ATPases have 2 components, F(1) - the catalytic core - and F(0) - the membrane proton channel. F(1) has five subunits: alpha(3), beta(3), gamma(1), delta(1), epsilon(1). F(0) has four main subunits: a(1), b(1), b'(1) and c(10-14). The alpha and beta chains form an alternating ring which encloses part of the gamma chain. F(1) is attached to F(0) by a central stalk formed by the gamma and epsilon chains, while a peripheral stalk is formed by the delta, b and b' chains.

It localises to the plastid. Its subcellular location is the chloroplast thylakoid membrane. Functionally, f(1)F(0) ATP synthase produces ATP from ADP in the presence of a proton or sodium gradient. F-type ATPases consist of two structural domains, F(1) containing the extramembraneous catalytic core and F(0) containing the membrane proton channel, linked together by a central stalk and a peripheral stalk. During catalysis, ATP synthesis in the catalytic domain of F(1) is coupled via a rotary mechanism of the central stalk subunits to proton translocation. Component of the F(0) channel, it forms part of the peripheral stalk, linking F(1) to F(0). This chain is ATP synthase subunit b, chloroplastic, found in Arabis hirsuta (Hairy rock-cress).